Here is a 206-residue protein sequence, read N- to C-terminus: LexA repressor (206 aa).

Positions 28 to 48 form a DNA-binding region, H-T-H motif; it reads VREIGEAVGLASSSTVHGHLA. Residues Ser-128 and Lys-166 each act as for autocatalytic cleavage activity in the active site.

This sequence belongs to the peptidase S24 family. Homodimer.

The enzyme catalyses Hydrolysis of Ala-|-Gly bond in repressor LexA.. Represses a number of genes involved in the response to DNA damage (SOS response), including recA and lexA. In the presence of single-stranded DNA, RecA interacts with LexA causing an autocatalytic cleavage which disrupts the DNA-binding part of LexA, leading to derepression of the SOS regulon and eventually DNA repair. In Bacillus velezensis (strain DSM 23117 / BGSC 10A6 / LMG 26770 / FZB42) (Bacillus amyloliquefaciens subsp. plantarum), this protein is LexA repressor.